The primary structure comprises 310 residues: tRNA uridine(34) hydroxylase (310 aa).

The Rhodanese domain maps to 123-217; it reads ADPDVVVIDV…YLEKVPEDES (95 aa). C177 (cysteine persulfide intermediate) is an active-site residue.

The protein belongs to the TrhO family.

The enzyme catalyses uridine(34) in tRNA + AH2 + O2 = 5-hydroxyuridine(34) in tRNA + A + H2O. Its function is as follows. Catalyzes oxygen-dependent 5-hydroxyuridine (ho5U) modification at position 34 in tRNAs. In Acaryochloris marina (strain MBIC 11017), this protein is tRNA uridine(34) hydroxylase.